The chain runs to 247 residues: Uridylate kinase (247 aa).

17 to 20 (KFSG) serves as a coordination point for ATP. Residue glycine 59 coordinates UMP. ATP contacts are provided by glycine 60 and arginine 64. UMP-binding positions include aspartate 79 and 140 to 147 (TGNPFFTT). Positions 167, 173, and 176 each coordinate ATP.

The protein belongs to the UMP kinase family. As to quaternary structure, homohexamer.

The protein localises to the cytoplasm. The enzyme catalyses UMP + ATP = UDP + ADP. Its pathway is pyrimidine metabolism; CTP biosynthesis via de novo pathway; UDP from UMP (UMPK route): step 1/1. Inhibited by UTP. In terms of biological role, catalyzes the reversible phosphorylation of UMP to UDP. The chain is Uridylate kinase from Legionella pneumophila (strain Paris).